A 335-amino-acid polypeptide reads, in one-letter code: D-alanine--D-alanine ligase (335 aa).

The ATP-grasp domain maps to 124–329 (KMWFSALGVP…FTHYLYSNIK (206 aa)). 154 to 209 (ALENWGSIFIKAASQGSSVGCYRVDSQDELVSSLEQAFSFSPYVIVEKTINARELE) is a binding site for ATP. Mg(2+) is bound by residues aspartate 283, glutamate 296, and asparagine 298.

This sequence belongs to the D-alanine--D-alanine ligase family. Requires Mg(2+) as cofactor. It depends on Mn(2+) as a cofactor.

It is found in the cytoplasm. The catalysed reaction is 2 D-alanine + ATP = D-alanyl-D-alanine + ADP + phosphate + H(+). It functions in the pathway cell wall biogenesis; peptidoglycan biosynthesis. Its function is as follows. Cell wall formation. The sequence is that of D-alanine--D-alanine ligase from Shewanella woodyi (strain ATCC 51908 / MS32).